The sequence spans 376 residues: Putative dihydroorotase (376 aa).

The Zn(2+) site is built by His-35 and His-37. Substrate contacts are provided by residues 37–39 and Asn-66; that span reads HVR. Asp-114, His-138, and His-187 together coordinate Zn(2+). Asn-230 contacts substrate. Residue Asp-257 participates in Zn(2+) binding. Asp-257 is an active-site residue. Residues His-261 and 273 to 274 contribute to the substrate site; that span reads YG.

This sequence belongs to the metallo-dependent hydrolases superfamily. DHOase family. Class I DHOase subfamily. It depends on Zn(2+) as a cofactor.

It carries out the reaction (S)-dihydroorotate + H2O = N-carbamoyl-L-aspartate + H(+). It participates in pyrimidine metabolism; UMP biosynthesis via de novo pathway; (S)-dihydroorotate from bicarbonate: step 3/3. Functionally, catalyzes the reversible cyclization of carbamoyl aspartate to dihydroorotate. The sequence is that of Putative dihydroorotase (pyrC) from Thermotoga maritima (strain ATCC 43589 / DSM 3109 / JCM 10099 / NBRC 100826 / MSB8).